A 259-amino-acid chain; its full sequence is ATP synthase subunit b 2 (259 aa).

A helical transmembrane segment spans residues 5–27; sequence WFTVSAQAINFLILVALLKRFLY.

The protein belongs to the ATPase B chain family. As to quaternary structure, F-type ATPases have 2 components, F(1) - the catalytic core - and F(0) - the membrane proton channel. F(1) has five subunits: alpha(3), beta(3), gamma(1), delta(1), epsilon(1). F(0) has three main subunits: a(1), b(2) and c(10-14). The alpha and beta chains form an alternating ring which encloses part of the gamma chain. F(1) is attached to F(0) by a central stalk formed by the gamma and epsilon chains, while a peripheral stalk is formed by the delta and b chains.

It is found in the cell inner membrane. Functionally, f(1)F(0) ATP synthase produces ATP from ADP in the presence of a proton or sodium gradient. F-type ATPases consist of two structural domains, F(1) containing the extramembraneous catalytic core and F(0) containing the membrane proton channel, linked together by a central stalk and a peripheral stalk. During catalysis, ATP synthesis in the catalytic domain of F(1) is coupled via a rotary mechanism of the central stalk subunits to proton translocation. Its function is as follows. Component of the F(0) channel, it forms part of the peripheral stalk, linking F(1) to F(0). The protein is ATP synthase subunit b 2 of Syntrophotalea carbinolica (strain DSM 2380 / NBRC 103641 / GraBd1) (Pelobacter carbinolicus).